The chain runs to 430 residues: MKTELSQKLFEKANDLFPGGVNSPVRAFKGVGGTPRFISRAKGSHIFDVDGNDYVDYVLSWGPMIVGHCHPEVMREVQDAMKEGSSFGAPSPREILLAELVRERMPWVEKMRFVSSGTEATTSAIRVARGFTGRDDIVKFDGCYHGAGDPLLVKAGSGVETLGLPDSPGVPADVARHTLTAPYNDLPALEKVFEAKGASIAAVILEPVVGNMGVLVPRPGFLQGVHDLCRKHGALYIVDEVMTGFRLSSGGACGLYGLRPDLVTFGKVIGAGLPVGAFGGRRDVMDRVAPAGPIYQAGTLSGNPMAMAAGHAALKLMTEAAYRKLEALSAALAEGLQAAAAEANVPVQVNRVGSMLTVFFSDRPVFDAASARACNTRRFGAFFHAMLEHGAYLPPSQFEAAFLSTAHTDDDVARTVAAARLAFAEAAKVA.

Position 267 is an N6-(pyridoxal phosphate)lysine (Lys-267).

The protein belongs to the class-III pyridoxal-phosphate-dependent aminotransferase family. HemL subfamily. In terms of assembly, homodimer. It depends on pyridoxal 5'-phosphate as a cofactor.

The protein resides in the cytoplasm. It catalyses the reaction (S)-4-amino-5-oxopentanoate = 5-aminolevulinate. It functions in the pathway porphyrin-containing compound metabolism; protoporphyrin-IX biosynthesis; 5-aminolevulinate from L-glutamyl-tRNA(Glu): step 2/2. The sequence is that of Glutamate-1-semialdehyde 2,1-aminomutase from Anaeromyxobacter dehalogenans (strain 2CP-1 / ATCC BAA-258).